A 208-amino-acid chain; its full sequence is Small ribosomal subunit protein eS8 (208 aa).

A disordered region spans residues 1–37; sequence MGISRDNWHKRRKTGGKRKPYHKKRKYEPGRPAANTK. Positions 8–26 are enriched in basic residues; sequence WHKRRKTGGKRKPYHKKRK.

This sequence belongs to the eukaryotic ribosomal protein eS8 family. Component of the small ribosomal subunit. Identified in a IGF2BP1-dependent mRNP granule complex containing untranslated mRNAs. Part of the small subunit (SSU) processome, composed of more than 70 proteins and the RNA chaperone small nucleolar RNA (snoRNA) U3.

The protein resides in the cytoplasm. The protein localises to the membrane. Its subcellular location is the nucleus. It is found in the nucleolus. Component of the small ribosomal subunit. The ribosome is a large ribonucleoprotein complex responsible for the synthesis of proteins in the cell. Part of the small subunit (SSU) processome, first precursor of the small eukaryotic ribosomal subunit. During the assembly of the SSU processome in the nucleolus, many ribosome biogenesis factors, an RNA chaperone and ribosomal proteins associate with the nascent pre-rRNA and work in concert to generate RNA folding, modifications, rearrangements and cleavage as well as targeted degradation of pre-ribosomal RNA by the RNA exosome. This chain is Small ribosomal subunit protein eS8 (rps8), found in Xenopus laevis (African clawed frog).